A 365-amino-acid chain; its full sequence is Deoxyribonuclease-2-alpha (365 aa).

Residues 1–19 form the signal peptide; it reads MATLSSLLLTALLWVPVGT. Cys-22 and Cys-162 form a disulfide bridge. 3 N-linked (GlcNAc...) asparagine glycosylation sites follow: Asn-215, Asn-269, and Asn-293. Disulfide bonds link Cys-270-Cys-348 and Cys-311-Cys-330. His-298 is a catalytic residue.

It belongs to the DNase II family.

The protein resides in the lysosome. It catalyses the reaction Endonucleolytic cleavage to nucleoside 3'-phosphates and 3'-phosphooligonucleotide end-products.. In terms of biological role, hydrolyzes DNA under acidic conditions with a preference for double-stranded DNA. Plays a major role in the clearance of nucleic acids generated through apoptosis, hence preventing autoinflammation. Necessary for proper fetal development and for definitive erythropoiesis in fetal liver and bone marrow, where it degrades nuclear DNA expelled from erythroid precursor cells. This Bos taurus (Bovine) protein is Deoxyribonuclease-2-alpha (DNASE2).